The sequence spans 275 residues: Elongation factor Ts (275 aa).

Residues 80 to 83 (TDFV) are involved in Mg(2+) ion dislocation from EF-Tu.

The protein belongs to the EF-Ts family.

The protein localises to the cytoplasm. In terms of biological role, associates with the EF-Tu.GDP complex and induces the exchange of GDP to GTP. It remains bound to the aminoacyl-tRNA.EF-Tu.GTP complex up to the GTP hydrolysis stage on the ribosome. This Clavibacter sepedonicus (Clavibacter michiganensis subsp. sepedonicus) protein is Elongation factor Ts.